The primary structure comprises 148 residues: Glutamyl-tRNA(Gln) amidotransferase subunit C, mitochondrial (148 aa).

The protein belongs to the GatC family. Subunit of the heterotrimeric GatCAB amidotransferase (AdT) complex, composed of A, B and C subunits.

The protein localises to the mitochondrion. The catalysed reaction is L-glutamyl-tRNA(Gln) + L-glutamine + ATP + H2O = L-glutaminyl-tRNA(Gln) + L-glutamate + ADP + phosphate + H(+). In terms of biological role, allows the formation of correctly charged Gln-tRNA(Gln) through the transamidation of misacylated Glu-tRNA(Gln) in the mitochondria. The reaction takes place in the presence of glutamine and ATP through an activated gamma-phospho-Glu-tRNA(Gln). In Drosophila pseudoobscura pseudoobscura (Fruit fly), this protein is Glutamyl-tRNA(Gln) amidotransferase subunit C, mitochondrial.